A 544-amino-acid chain; its full sequence is Dynein intermediate chain 1 (544 aa).

6 WD repeats span residues 241–281 (KARS…YPVS), 289–330 (GHLE…RPSE), 342–387 (SQCI…QPSN), 402–441 (VMTS…NQHE), 461–501 (THKA…EAPV), and 506–544 (PDGK…NLAN).

It belongs to the dynein intermediate chain family.

The protein localises to the cytoplasm. In terms of biological role, has a role in meiotic nuclear divsion where it promotes the movement of 'horsetails'. The sequence is that of Dynein intermediate chain 1 (dic1) from Schizosaccharomyces pombe (strain 972 / ATCC 24843) (Fission yeast).